A 620-amino-acid polypeptide reads, in one-letter code: Chaperone protein HtpG (620 aa).

An a; substrate-binding region spans residues 1–334 (MTTTDTAPQT…SEDLPLNLSR (334 aa)). Residues 335–548 (EMLQNNPQLV…GQGPDRALER (214 aa)) are b. The interval 549 to 620 (MLAQQNRGGA…RINRLVLRAL (72 aa)) is c.

The protein belongs to the heat shock protein 90 family. As to quaternary structure, homodimer.

Its subcellular location is the cytoplasm. Molecular chaperone. Has ATPase activity. The protein is Chaperone protein HtpG of Rhodopseudomonas palustris (strain BisA53).